Here is a 526-residue protein sequence, read N- to C-terminus: MHDKIVVLDFGSQYTQLIARRVRETGVYSEIRPCTVEADAIDALNPSGVILSGGPCSVYDEAGPALDPALLELERPDGTPVPLLGICYGLQAMAHQFGGEVARADRREFGRAQLQVPPDGQEKSLLFEGVPSGSTVWMSHSDHLTDLPDGYEVIARTDNAPVAAVRDTDGPYYGVQFHPEVVHTDYGRQILENFAHAICGCSGDWTPASFVEEQTETIRDRVGDRHVILGLSGGVDSSVAAALLQRALGDQLHCIFVNNGLLRKGEWNQVQDTFRGHFEMDLRTTDATDRFLERLDGVTDPEEKRTIVGNTFIEVFEEQTEAIAADLGHRPTYLAQGTLYPDLIESVSFKGPSVTIKTHHNVGGLPEELDFDLIEPFRELFKDEVREIGRLLDVPDPIVGRHPFPGPGLAIRILGQITRERLALLREADAIFIEELRANDLYDEVWQAFAVLLPVQAVGVMGDERTYENVCALRAVTSVDGMTADWAHLPHDFLGHVSNRIVNEVPGINRIVYDVSSKPPATIEWE.

Residues 4 to 204 (KIVVLDFGSQ…AHAICGCSGD (201 aa)) enclose the Glutamine amidotransferase type-1 domain. Cys87 acts as the Nucleophile in catalysis. Active-site residues include His178 and Glu180. The region spanning 205 to 401 (WTPASFVEEQ…LDVPDPIVGR (197 aa)) is the GMPS ATP-PPase domain. 232–238 (SGGVDSS) contacts ATP.

Homodimer.

The catalysed reaction is XMP + L-glutamine + ATP + H2O = GMP + L-glutamate + AMP + diphosphate + 2 H(+). It participates in purine metabolism; GMP biosynthesis; GMP from XMP (L-Gln route): step 1/1. Catalyzes the synthesis of GMP from XMP. The sequence is that of GMP synthase [glutamine-hydrolyzing] from Salinibacter ruber (strain DSM 13855 / M31).